The following is a 684-amino-acid chain: Multisite-specific tRNA:(cytosine-C(5))-methyltransferase (684 aa).

The span at 1 to 12 shows a compositional bias: basic residues; the sequence is MARRKNFKKGNK. Positions 1-24 are disordered; sequence MARRKNFKKGNKKTFGARDDSRAQ. S-adenosyl-L-methionine is bound by residues 173–179, Asp-202, Asp-229, and Asp-257; that span reads CAAPGSK. The active-site Nucleophile is the Cys-310. Thr-426 bears the Phosphothreonine mark. The residue at position 431 (Ser-431) is a Phosphoserine. The interval 650-684 is disordered; sequence KATPSAEEKEKEKETTESPAETTTGTSTEAPSAAN. A compositionally biased stretch (basic and acidic residues) spans 655–665; sequence AEEKEKEKETT. Over residues 666–684 the composition is skewed to low complexity; the sequence is ESPAETTTGTSTEAPSAAN. At Ser-667 the chain carries Phosphoserine.

Belongs to the class I-like SAM-binding methyltransferase superfamily. RsmB/NOP family. TRM4 subfamily.

It localises to the nucleus. It is found in the nucleolus. The catalysed reaction is cytidine(34) in tRNA precursor + S-adenosyl-L-methionine = 5-methylcytidine(34) in tRNA precursor + S-adenosyl-L-homocysteine + H(+). It catalyses the reaction cytidine(40) in tRNA precursor + S-adenosyl-L-methionine = 5-methylcytidine(40) in tRNA precursor + S-adenosyl-L-homocysteine + H(+). The enzyme catalyses cytidine(48) in tRNA + S-adenosyl-L-methionine = 5-methylcytidine(48) in tRNA + S-adenosyl-L-homocysteine + H(+). It carries out the reaction cytidine(49) in tRNA + S-adenosyl-L-methionine = 5-methylcytidine(49) in tRNA + S-adenosyl-L-homocysteine + H(+). Functionally, methylates cytosine to m5C at several positions in different tRNAs and pre-tRNAs containing intron. Able to modify tRNAs at all four positions (34, 40, 48 and 49) at which m5C has been found in tRNAs. May be involved in ribosome biogenesis as its disruption leads to increased sensitivity to the antibiotic paromomycin. This is Multisite-specific tRNA:(cytosine-C(5))-methyltransferase (NCL1) from Saccharomyces cerevisiae (strain ATCC 204508 / S288c) (Baker's yeast).